The sequence spans 194 residues: MYQNHKSEILLATPLIKDDIVFTKSVVYLCQNDRHGAMGLIINKPLADTLKDVFEELHISHTNTFKEILEYPLYMGGPISPHKIMILHTTNGRNYTSTIKLDEGLAITASIDILEDIANNILPEYFLPVVGYSCWTANQLTDEIKSNDWIVTNKLNKKILFNHENKVKWQNHLEHAGYTLQSLDTLFNRNTGNC.

It belongs to the UPF0301 (AlgH) family.

The sequence is that of UPF0301 protein FTA_1286 from Francisella tularensis subsp. holarctica (strain FTNF002-00 / FTA).